We begin with the raw amino-acid sequence, 448 residues long: DNA primase DnaG (448 aa).

One can recognise a Toprim domain in the interval Asp-186–Pro-260. The Mg(2+) site is built by Glu-192, Asp-234, and Asp-236. The segment at Ala-318 to Gln-340 is disordered. Basic and acidic residues predominate over residues Pro-329 to Gln-338.

Belongs to the archaeal DnaG primase family. Forms a ternary complex with MCM helicase and DNA. Component of the archaeal exosome complex. Mg(2+) is required as a cofactor.

It carries out the reaction ssDNA + n NTP = ssDNA/pppN(pN)n-1 hybrid + (n-1) diphosphate.. In terms of biological role, RNA polymerase that catalyzes the synthesis of short RNA molecules used as primers for DNA polymerase during DNA replication. Also part of the exosome, which is a complex involved in RNA degradation. Acts as a poly(A)-binding protein that enhances the interaction between heteromeric, adenine-rich transcripts and the exosome. The protein is DNA primase DnaG of Thermoplasma acidophilum (strain ATCC 25905 / DSM 1728 / JCM 9062 / NBRC 15155 / AMRC-C165).